A 415-amino-acid polypeptide reads, in one-letter code: Heterogeneous nuclear ribonucleoprotein F (415 aa).

Residue Met-1 is modified to N-acetylmethionine. Met-2 bears the N-acetylmethionine; in Heterogeneous nuclear ribonucleoprotein F, N-terminally processed mark. An RRM 1 domain is found at 13 to 85 (VKLRGLPWSC…ESMGHRYIEV (73 aa)). Lys-72 participates in a covalent cross-link: Glycyl lysine isopeptide (Lys-Gly) (interchain with G-Cter in SUMO). The interval 81 to 86 (RYIEVF) is interaction with RNA. Residue Lys-87 forms a Glycyl lysine isopeptide (Lys-Gly) (interchain with G-Cter in SUMO2) linkage. Phosphoserine occurs at positions 104, 107, and 161. The region spanning 111-188 (GFVRLRGLPF…RYIEVFKSSQ (78 aa)) is the RRM 2 domain. A Glycyl lysine isopeptide (Lys-Gly) (interchain with G-Cter in SUMO2) cross-link involves residue Lys-167. Residues 179 to 184 (RYIEVF) are interaction with RNA. Residue Lys-185 forms a Glycyl lysine isopeptide (Lys-Gly) (interchain with G-Cter in SUMO2) linkage. Phosphoserine occurs at positions 187, 193, and 195. Residue Lys-200 is modified to N6-acetyllysine; alternate. Lys-200 is covalently cross-linked (Glycyl lysine isopeptide (Lys-Gly) (interchain with G-Cter in SUMO2); alternate). Phosphothreonine is present on Thr-215. The residue at position 224 (Lys-224) is an N6-acetyllysine; alternate. A Glycyl lysine isopeptide (Lys-Gly) (interchain with G-Cter in SUMO2); alternate cross-link involves residue Lys-224. Ser-265 is subject to Phosphoserine. Positions 289–366 (HCVHMRGLPY…IELFLNSTTG (78 aa)) constitute an RRM 3 domain. An interaction with RNA region spans residues 355–360 (RYIELF).

As to quaternary structure, identified in the spliceosome C complex. Interacts with AGO1, AGO2, TBP and TXNL4/DIM1. In terms of processing, sumoylated.

It is found in the nucleus. Its subcellular location is the nucleoplasm. Functionally, component of the heterogeneous nuclear ribonucleoprotein (hnRNP) complexes which provide the substrate for the processing events that pre-mRNAs undergo before becoming functional, translatable mRNAs in the cytoplasm. Plays a role in the regulation of alternative splicing events. Binds G-rich sequences in pre-mRNAs and keeps target RNA in an unfolded state. This Macaca fascicularis (Crab-eating macaque) protein is Heterogeneous nuclear ribonucleoprotein F (HNRNPF).